The primary structure comprises 357 residues: Protein-glutamate methylesterase/protein-glutamine glutaminase (357 aa).

In terms of domain architecture, Response regulatory spans 3–120 (RVIVVDDSAF…LASMDLAALS (118 aa)). Aspartate 54 carries the 4-aspartylphosphate modification. The region spanning 165-357 (ERSRRDIIAI…AERVASALYK (193 aa)) is the CheB-type methylesterase domain. Residues serine 177, histidine 204, and aspartate 300 contribute to the active site.

The protein belongs to the CheB family. Phosphorylated by CheA. Phosphorylation of the N-terminal regulatory domain activates the methylesterase activity.

Its subcellular location is the cytoplasm. It carries out the reaction [protein]-L-glutamate 5-O-methyl ester + H2O = L-glutamyl-[protein] + methanol + H(+). The catalysed reaction is L-glutaminyl-[protein] + H2O = L-glutamyl-[protein] + NH4(+). Involved in chemotaxis. Part of a chemotaxis signal transduction system that modulates chemotaxis in response to various stimuli. Catalyzes the demethylation of specific methylglutamate residues introduced into the chemoreceptors (methyl-accepting chemotaxis proteins or MCP) by CheR. Also mediates the irreversible deamidation of specific glutamine residues to glutamic acid. The protein is Protein-glutamate methylesterase/protein-glutamine glutaminase of Lawsonia intracellularis (strain PHE/MN1-00).